A 309-amino-acid polypeptide reads, in one-letter code: Golgi-associated RAB2 interactor protein 1A (309 aa).

Serine 231, serine 263, and serine 267 each carry phosphoserine.

The protein belongs to the GARIN family. In terms of assembly, interacts (via N-terminus) with RAB2B (in GTP-bound form).

Its subcellular location is the golgi apparatus. RAB2B effector protein required for accurate acrosome formation and normal male fertility. The sequence is that of Golgi-associated RAB2 interactor protein 1A from Homo sapiens (Human).